We begin with the raw amino-acid sequence, 1086 residues long: Calcium-transporting ATPase 9, plasma membrane-type (1086 aa).

A compositionally biased stretch (low complexity) spans 1-15 (MSTSSSNGLLLTSMS). The tract at residues 1-50 (MSTSSSNGLLLTSMSGRHDDMEAGSAKTEEHSDHEELQHDPDDPFDIDNT) is disordered. At 1 to 194 (MSTSSSNGLL…NTYPKKKGKN (194 aa)) the chain is on the cytoplasmic side. A compositionally biased stretch (basic and acidic residues) spans 16–42 (GRHDDMEAGSAKTEEHSDHEELQHDPD). The interval 57-68 (SLRRWRQAALVL) is interaction with calmodulin. A helical transmembrane segment spans residues 195–215 (FFMFLWEAWQDLTLIILIIAA). Residues 216–233 (VTSLALGIKTEGLKEGWL) lie on the Lumenal side of the membrane. The chain crosses the membrane as a helical span at residues 234–254 (DGGSIAFAVLLVIVVTAVSDY). The Cytoplasmic segment spans residues 255 to 382 (RQSLQFQNLN…GEETPLQVRL (128 aa)). The helical transmembrane segment at 383 to 402 (NGLATFIGIVGLSVALVVLV) threads the bilayer. Residues 403–439 (ALLVRYFTGTTQDTNGATQFIKGTTSISDIVDDCVKI) lie on the Lumenal side of the membrane. Residues 440–457 (FTIAVTIVVVAVPEGLPL) form a helical membrane-spanning segment. Over 458 to 857 (AVTLTLAYSM…RWGRSVYANI (400 aa)) the chain is Cytoplasmic. The active-site 4-aspartylphosphate intermediate is D495. Mg(2+) is bound by residues D802 and D806. The chain crosses the membrane as a helical span at residues 858-876 (QKFIQFQLTVNVAALIINV). Over 877–887 (VAAMSSGDVPL) the chain is Lumenal. The helical transmembrane segment at 888-908 (KAVQLLWVNLIMDTLGALALA) threads the bilayer. Residues 909-928 (TEPPTDHLMHRTPVGRREPL) lie on the Cytoplasmic side of the membrane. Residues 929–951 (ITNIMWRNLLVQSFYQVAVLLVL) traverse the membrane as a helical segment. At 952 to 963 (NFAGLSILGLNH) the chain is on the lumenal side. The chain crosses the membrane as a helical span at residues 964-988 (ENHAHAVEVKNTMIFNAFVMCQIFN). Topologically, residues 989–1006 (EFNARKPDEMNVFRGVNK) are cytoplasmic. Residues 1007 to 1028 (NPLFVAIVGVTFILQIIIVTFL) traverse the membrane as a helical segment. Topologically, residues 1029–1038 (GKFAHTVRLG) are lumenal. Residues 1039–1060 (WQLWLASIIIGLVSWPLAIVGK) form a helical membrane-spanning segment. Over 1061-1086 (LIPVPKTPMSVYFKKPFRKYKASRNA) the chain is Cytoplasmic.

The protein belongs to the cation transport ATPase (P-type) (TC 3.A.3) family. Type IIB subfamily.

Its subcellular location is the membrane. The catalysed reaction is Ca(2+)(in) + ATP + H2O = Ca(2+)(out) + ADP + phosphate + H(+). Activated by calmodulin. In terms of biological role, this magnesium-dependent enzyme catalyzes the hydrolysis of ATP coupled with the translocation of calcium from the cytosol out of the cell or into organelles. This Arabidopsis thaliana (Mouse-ear cress) protein is Calcium-transporting ATPase 9, plasma membrane-type (ACA9).